A 202-amino-acid polypeptide reads, in one-letter code: ATP synthase subunit b (202 aa).

A helical transmembrane segment spans residues 9-29; sequence TTLSLCLAVCVVVIAVGTGWA.

The protein belongs to the ATPase B chain family. As to quaternary structure, F-type ATPases have 2 components, F(1) - the catalytic core - and F(0) - the membrane proton channel. F(1) has five subunits: alpha(3), beta(3), gamma(1), delta(1), epsilon(1). F(0) has three main subunits: a(1), b(2) and c(10-14). The alpha and beta chains form an alternating ring which encloses part of the gamma chain. F(1) is attached to F(0) by a central stalk formed by the gamma and epsilon chains, while a peripheral stalk is formed by the delta and b chains.

The protein resides in the cell inner membrane. Functionally, f(1)F(0) ATP synthase produces ATP from ADP in the presence of a proton or sodium gradient. F-type ATPases consist of two structural domains, F(1) containing the extramembraneous catalytic core and F(0) containing the membrane proton channel, linked together by a central stalk and a peripheral stalk. During catalysis, ATP synthesis in the catalytic domain of F(1) is coupled via a rotary mechanism of the central stalk subunits to proton translocation. In terms of biological role, component of the F(0) channel, it forms part of the peripheral stalk, linking F(1) to F(0). The protein is ATP synthase subunit b of Pelobacter propionicus (strain DSM 2379 / NBRC 103807 / OttBd1).